Reading from the N-terminus, the 414-residue chain is Methylthioribose-1-phosphate isomerase (414 aa).

A compositionally biased stretch (polar residues) spans 205–215 (SQSQGSENPPS). The disordered stretch occupies residues 205-224 (SQSQGSENPPSKKQKKDAAP). Asp-283 acts as the Proton donor in catalysis.

This sequence belongs to the eIF-2B alpha/beta/delta subunits family. MtnA subfamily.

Its subcellular location is the cytoplasm. The protein resides in the nucleus. The catalysed reaction is 5-(methylsulfanyl)-alpha-D-ribose 1-phosphate = 5-(methylsulfanyl)-D-ribulose 1-phosphate. The protein operates within amino-acid biosynthesis; L-methionine biosynthesis via salvage pathway; L-methionine from S-methyl-5-thio-alpha-D-ribose 1-phosphate: step 1/6. In terms of biological role, catalyzes the interconversion of methylthioribose-1-phosphate (MTR-1-P) into methylthioribulose-1-phosphate (MTRu-1-P). This is Methylthioribose-1-phosphate isomerase from Zygosaccharomyces rouxii (strain ATCC 2623 / CBS 732 / NBRC 1130 / NCYC 568 / NRRL Y-229).